Reading from the N-terminus, the 290-residue chain is 7-methylguanosine phosphate-specific 5'-nucleotidase B (290 aa).

Residue aspartate 39 is the Nucleophile of the active site. Mg(2+) contacts are provided by aspartate 39 and aspartate 41. Aspartate 41 (proton donor) is an active-site residue. Glutamate 86 contributes to the CMP binding site. N(7)-methyl-GMP is bound at residue glutamate 86. Substrate contacts are provided by residues 154–155 and lysine 203; that span reads SA. Aspartate 228 contributes to the Mg(2+) binding site.

The protein belongs to the pyrimidine 5'-nucleotidase family. In terms of assembly, monomer.

The protein resides in the cytoplasm. It catalyses the reaction N(7)-methyl-GMP + H2O = N(7)-methylguanosine + phosphate. It carries out the reaction CMP + H2O = cytidine + phosphate. The catalysed reaction is a ribonucleoside 5'-phosphate + H2O = a ribonucleoside + phosphate. Specifically hydrolyzes 7-methylguanosine monophosphate (m(7)GMP) to 7-methylguanosine and inorganic phosphate. The specific activity for m(7)GMP may protect cells against undesired salvage of m(7)GMP and its incorporation into nucleic acids. Also has weak activity for CMP. UMP and purine nucleotides are poor substrates. The sequence is that of 7-methylguanosine phosphate-specific 5'-nucleotidase B (Nt5c3b-b) from Xenopus laevis (African clawed frog).